Reading from the N-terminus, the 707-residue chain is Integrator complex subunit 13 (707 aa).

Over residues 565-625 the composition is skewed to basic and acidic residues; sequence PPEEEERKKR…AEAEVIKDSP (61 aa). The disordered stretch occupies residues 565 to 651; the sequence is PPEEEERKKR…TGPAEKSKGP (87 aa). A coiled-coil region spans residues 567 to 622; it reads EEEERKKRGRKREDKEEKAEKPPKENEHEKKWQESERVKSVLDREKEDLAEAEVIK. A Nuclear localization signal (NLS) motif is present at residues 573-583; it reads KRGRKREDKEE. The segment at 650 to 695 is cleavage module binding motif (CMBM); it reads GPMSLLSLWSSRINTANSRKHQEFVGRLNSVNNKAELYQHLKEENG.

It belongs to the Integrator subunit 13 family. As to quaternary structure, component of the Integrator complex, composed of core subunits INTS1, INTS2, INTS3, INTS4, INTS5, INTS6, INTS7, INTS8, INTS9/RC74, INTS10, INTS11/CPSF3L, INTS12, INTS13, INTS14 and INTS15. The core complex associates with protein phosphatase 2A subunits PPP2CA and PPP2R1A, to form the Integrator-PP2A (INTAC) complex. INTS13 is part of the tail subcomplex, composed of INTS10, INTS13, INTS14 and INTS15.

It localises to the nucleus. The protein resides in the cytoplasm. Functionally, component of the integrator complex, a multiprotein complex that terminates RNA polymerase II (Pol II) transcription in the promoter-proximal region of genes. The integrator complex provides a quality checkpoint during transcription elongation by driving premature transcription termination of transcripts that are unfavorably configured for transcriptional elongation: the complex terminates transcription by (1) catalyzing dephosphorylation of the C-terminal domain (CTD) of Pol II subunit POLR2A/RPB1 and SUPT5H/SPT5, (2) degrading the exiting nascent RNA transcript via endonuclease activity and (3) promoting the release of Pol II from bound DNA. The integrator complex is also involved in terminating the synthesis of non-coding Pol II transcripts, such as enhancer RNAs (eRNAs), small nuclear RNAs (snRNAs), telomerase RNAs and long non-coding RNAs (lncRNAs). Within the integrator complex, INTS13 is part of the integrator tail module and acts as a platform for the recruitment of transcription factors at promoters. This is Integrator complex subunit 13 from Xenopus tropicalis (Western clawed frog).